The primary structure comprises 252 residues: 3-deoxy-manno-octulosonate cytidylyltransferase (252 aa).

It belongs to the KdsB family.

Its subcellular location is the cytoplasm. The catalysed reaction is 3-deoxy-alpha-D-manno-oct-2-ulosonate + CTP = CMP-3-deoxy-beta-D-manno-octulosonate + diphosphate. It participates in nucleotide-sugar biosynthesis; CMP-3-deoxy-D-manno-octulosonate biosynthesis; CMP-3-deoxy-D-manno-octulosonate from 3-deoxy-D-manno-octulosonate and CTP: step 1/1. Its pathway is bacterial outer membrane biogenesis; lipopolysaccharide biosynthesis. Activates KDO (a required 8-carbon sugar) for incorporation into bacterial lipopolysaccharide in Gram-negative bacteria. The sequence is that of 3-deoxy-manno-octulosonate cytidylyltransferase from Nitratidesulfovibrio vulgaris (strain ATCC 29579 / DSM 644 / CCUG 34227 / NCIMB 8303 / VKM B-1760 / Hildenborough) (Desulfovibrio vulgaris).